We begin with the raw amino-acid sequence, 352 residues long: Histidinol-phosphate aminotransferase (352 aa).

Lys-211 is subject to N6-(pyridoxal phosphate)lysine.

The protein belongs to the class-II pyridoxal-phosphate-dependent aminotransferase family. Histidinol-phosphate aminotransferase subfamily. As to quaternary structure, homodimer. It depends on pyridoxal 5'-phosphate as a cofactor.

It catalyses the reaction L-histidinol phosphate + 2-oxoglutarate = 3-(imidazol-4-yl)-2-oxopropyl phosphate + L-glutamate. The protein operates within amino-acid biosynthesis; L-histidine biosynthesis; L-histidine from 5-phospho-alpha-D-ribose 1-diphosphate: step 7/9. This Haemophilus influenzae (strain PittGG) protein is Histidinol-phosphate aminotransferase.